Reading from the N-terminus, the 497-residue chain is Latent membrane protein 2 (497 aa).

The interval 1-108 is disordered; the sequence is MGSLEMVPMG…PPYSPRDDSS (108 aa). At 1 to 123 the chain is on the cytoplasmic side; that stretch reads MGSLEMVPMG…EAGRGSMNPV (123 aa). Over residues 27–41 the composition is skewed to polar residues; sequence NNSQYPSASGSSGNT. The PPxY motif motif lies at 97–101; the sequence is PPPPY. Tyr-112 bears the Phosphotyrosine; by host mark. A helical transmembrane segment spans residues 124–144; sequence CLPVIVAPYLFWLAAIAASCF. Residues 145–147 are Extracellular-facing; it reads TAS. The helical transmembrane segment at 148-168 threads the bilayer; it reads VSTVVTATGLALSLLLLAAVA. Residues 169–177 lie on the Cytoplasmic side of the membrane; the sequence is SSYAAAQRK. Residues 178–198 traverse the membrane as a helical segment; the sequence is LLTPVTVLTAVVTFFAICLTW. Residues 199-211 are Extracellular-facing; that stretch reads RIEDPPFNSLLFA. Residues 212-232 form a helical membrane-spanning segment; it reads LLAAAGGLQGIYVLVMLVLLI. Topologically, residues 233–241 are cytoplasmic; the sequence is LAYRRRWRR. The chain crosses the membrane as a helical span at residues 242-262; sequence LTVCGGIMFLACVLVLIVDAV. Residues 263-267 are Extracellular-facing; the sequence is LQLSP. The chain crosses the membrane as a helical span at residues 268-288; the sequence is LLGAVTVVSMTLLLLAFVLWL. The Cytoplasmic segment spans residues 289 to 296; the sequence is SSPGGLGT. The chain crosses the membrane as a helical span at residues 297–317; sequence LGAALLTLAAALALLASLILG. A topological domain (extracellular) is located at residue Thr-318. The chain crosses the membrane as a helical span at residues 319 to 339; it reads LNLTTMFLLMLLWTLVVLLIC. Over 340–354 the chain is Cytoplasmic; sequence SSCSSCPLSKILLAR. The chain crosses the membrane as a helical span at residues 355–375; the sequence is LFLYALALLLLASALIAGGSI. Topologically, residues 376 to 388 are extracellular; the sequence is LQTNFKSLSSTEF. A helical membrane pass occupies residues 389–409; that stretch reads IPNLFCMLLLIVAGILFILAI. At 410 to 422 the chain is on the cytoplasmic side; the sequence is LTEWGSGNRTYGP. Residues 423–443 traverse the membrane as a helical segment; the sequence is VFMCLGGLLTMVAGAVWLTVM. Residues 444–449 lie on the Extracellular side of the membrane; it reads SNTLLS. The helical transmembrane segment at 450–470 threads the bilayer; the sequence is AWILTAGFLIFLIGFALFGVI. Residues 471–497 are Cytoplasmic-facing; the sequence is RCCRYCCYYCLTLESEERPPTPYRNTV.

This sequence belongs to the herpesviridae LMP-2 family. As to quaternary structure, the cytoplasmic N-terminal domain interacts with human SRC family protein tyrosine kinases SYK and LYN. Binds human ITCH, WWP2 and NEDD4L. Phosphorylated on cytoplasmic N-terminal tyrosine residues, possibly by human LYN. Post-translationally, can be ubiquitinated by human ITCH and WWP2 on the N-terminus in a lysine-independent manner.

It is found in the host cell membrane. It localises to the host endomembrane system. Its subcellular location is the host cytoplasm. The protein resides in the host perinuclear region. Functionally, maintains EBV latent infection of B-lymphocyte, by preventing lytic reactivation of the virus in response to surface immunoglobulin (sIg) cross-linking. Acts like a dominant negative inhibitor of the sIg-associated protein tyrosine kinases, LYN and SYK. Also blocks translocation of the B-cell antigen receptor (BCR) into lipid rafts, preventing the subsequent signaling and accelerated internalization of the BCR upon BCR cross-linking. Serves as a molecular scaffold to recruit SYK, LYN and E3 protein-ubiquitin ligases, such as ITCH and NEDD4L, leading to ubiquitination and potential degradation of both tyrosines kinases. Possesses a constitutive signaling activity in non-transformed cells, inducing bypass of normal B lymphocyte developmental checkpoints allowing immunoglobulin-negative cells to colonize peripheral lymphoid organs. May be a negative regulator of isoform LMP2A. The sequence is that of Latent membrane protein 2 (LMP2) from Epstein-Barr virus (strain B95-8) (HHV-4).